Here is a 186-residue protein sequence, read N- to C-terminus: Large ribosomal subunit protein uL5 (186 aa).

The protein belongs to the universal ribosomal protein uL5 family. Part of the 50S ribosomal subunit; part of the 5S rRNA/L5/L18/L25 subcomplex. Contacts the 5S rRNA and the P site tRNA. Forms a bridge to the 30S subunit in the 70S ribosome.

In terms of biological role, this is one of the proteins that bind and probably mediate the attachment of the 5S RNA into the large ribosomal subunit, where it forms part of the central protuberance. In the 70S ribosome it contacts protein S13 of the 30S subunit (bridge B1b), connecting the 2 subunits; this bridge is implicated in subunit movement. Contacts the P site tRNA; the 5S rRNA and some of its associated proteins might help stabilize positioning of ribosome-bound tRNAs. This chain is Large ribosomal subunit protein uL5, found in Porphyromonas gingivalis (strain ATCC 33277 / DSM 20709 / CIP 103683 / JCM 12257 / NCTC 11834 / 2561).